A 177-amino-acid polypeptide reads, in one-letter code: ATP synthase subunit delta (177 aa).

This sequence belongs to the ATPase delta chain family. As to quaternary structure, F-type ATPases have 2 components, F(1) - the catalytic core - and F(0) - the membrane proton channel. F(1) has five subunits: alpha(3), beta(3), gamma(1), delta(1), epsilon(1). F(0) has three main subunits: a(1), b(2) and c(10-14). The alpha and beta chains form an alternating ring which encloses part of the gamma chain. F(1) is attached to F(0) by a central stalk formed by the gamma and epsilon chains, while a peripheral stalk is formed by the delta and b chains.

The protein resides in the cell inner membrane. F(1)F(0) ATP synthase produces ATP from ADP in the presence of a proton or sodium gradient. F-type ATPases consist of two structural domains, F(1) containing the extramembraneous catalytic core and F(0) containing the membrane proton channel, linked together by a central stalk and a peripheral stalk. During catalysis, ATP synthesis in the catalytic domain of F(1) is coupled via a rotary mechanism of the central stalk subunits to proton translocation. Functionally, this protein is part of the stalk that links CF(0) to CF(1). It either transmits conformational changes from CF(0) to CF(1) or is implicated in proton conduction. The chain is ATP synthase subunit delta from Shigella flexneri.